The primary structure comprises 335 residues: Protein BIG1 (335 aa).

An N-terminal signal peptide occupies residues 1–17 (MQTVLKYLLLIMCGSFC). Residues 20–275 (EELQNQTNVP…FDSQLIENNR (256 aa)) are Lumenal-facing. Residues Asn24 and Asn144 are each glycosylated (N-linked (GlcNAc...) asparagine). Residues 276–296 (GLLQLIFTILVGYILIQFFFT) form a helical membrane-spanning segment. The Cytoplasmic portion of the chain corresponds to 297–335 (KKTIVDEKITNKKDNVKQTSPQLLKKVQEIQKKPSQQVS).

Belongs to the BIG1 family. N-glycosylated.

The protein localises to the endoplasmic reticulum membrane. Functionally, required for normal beta-1,6-glucan synthesis. This Saccharomyces cerevisiae (strain ATCC 204508 / S288c) (Baker's yeast) protein is Protein BIG1 (BIG1).